The chain runs to 169 residues: ATP synthase subunit b (169 aa).

Residues 12 to 32 traverse the membrane as a helical segment; it reads HIYLGNAIWYLLCFAILMLLI.

The protein belongs to the ATPase B chain family. In terms of assembly, F-type ATPases have 2 components, F(1) - the catalytic core - and F(0) - the membrane proton channel. F(1) has five subunits: alpha(3), beta(3), gamma(1), delta(1), epsilon(1). F(0) has three main subunits: a(1), b(2) and c(10-14). The alpha and beta chains form an alternating ring which encloses part of the gamma chain. F(1) is attached to F(0) by a central stalk formed by the gamma and epsilon chains, while a peripheral stalk is formed by the delta and b chains.

Its subcellular location is the cell membrane. With respect to regulation, increases 2-fold following exposure to low pH. F(1)F(0) ATP synthase produces ATP from ADP in the presence of a proton or sodium gradient. F-type ATPases consist of two structural domains, F(1) containing the extramembraneous catalytic core and F(0) containing the membrane proton channel, linked together by a central stalk and a peripheral stalk. During catalysis, ATP synthesis in the catalytic domain of F(1) is coupled via a rotary mechanism of the central stalk subunits to proton translocation. Its function is as follows. Component of the F(0) channel, it forms part of the peripheral stalk, linking F(1) to F(0). The chain is ATP synthase subunit b from Lactobacillus acidophilus (strain ATCC 700396 / NCK56 / N2 / NCFM).